The sequence spans 370 residues: Tyrosyl-DNA phosphodiesterase 2 (370 aa).

M1 carries the N-acetylmethionine modification. The segment at 1-32 (MASGSSSDAAEPAGPAGRAASAPEAAQAEEDR) is disordered. Residues 9 to 26 (AAEPAGPAGRAASAPEAA) are compositionally biased toward low complexity. A Glycyl lysine isopeptide (Lys-Gly) (interchain with G-Cter in SUMO2) cross-link involves residue K34. Phosphothreonine; by ACVR1B is present on T99. An interaction with 5' end of substrate DNA region spans residues 130-134 (NIDGL). Residues D132 and E162 each contribute to the Mg(2+) site. The interaction with 5' end of substrate DNA stretch occupies residues 236–241 (HLESTR). D272 (proton donor/acceptor) is an active-site residue. Interaction with 5' end of substrate DNA stretches follow at residues 274 to 276 (NLR) and 315 to 321 (LRIPAAY).

Belongs to the CCR4/nocturin family. In terms of assembly, interacts with TRAF2, TRAF3, TRAF5, TRAF6, TNFRSF8/CD30, TNFRSF5/CD40, TNFRSF1B/TNF-R75, ETS1, ETS2, FLI1, SMAD3 and ACVR1B/ALK4. Requires Mg(2+) as cofactor. Mn(2+) is required as a cofactor. Ubiquitinated by TRAF6. In terms of tissue distribution, widely expressed. Expressed in whole brain, cerebellum, quiescent cortical astrocytes and cerebellar granule neurons.

The protein resides in the nucleus. It is found in the PML body. Its subcellular location is the nucleolus. It localises to the cytoplasm. Functionally, DNA repair enzyme that can remove a variety of covalent adducts from DNA through hydrolysis of a 5'-phosphodiester bond, giving rise to DNA with a free 5' phosphate. Catalyzes the hydrolysis of dead-end complexes between DNA and the topoisomerase 2 (TOP2) active site tyrosine residue. The 5'-tyrosyl DNA phosphodiesterase activity can enable the repair of TOP2-induced DNA double-strand breaks/DSBs without the need for nuclease activity, creating a 'clean' DSB with 5'-phosphate termini that are ready for ligation. Thereby, protects the transcription of many genes involved in neurological development and maintenance from the abortive activity of TOP2. Hydrolyzes 5'-phosphoglycolates on protruding 5' ends on DSBs due to DNA damage by radiation and free radicals. Has preference for single-stranded DNA or duplex DNA with a 4 base pair overhang as substrate. Also has 3'-tyrosyl DNA phosphodiesterase activity, but less efficiently and much slower than TDP1. Constitutes the major if not only 5'-tyrosyl-DNA phosphodiesterase in cells. Also acts as an adapter by participating in the specific activation of MAP3K7/TAK1 in response to TGF-beta: associates with components of the TGF-beta receptor-TRAF6-TAK1 signaling module and promotes their ubiquitination dependent complex formation. Involved in non-canonical TGF-beta induced signaling routes. May also act as a negative regulator of ETS1 and may inhibit NF-kappa-B activation. Acts as a regulator of ribosome biogenesis following stress. The chain is Tyrosyl-DNA phosphodiesterase 2 (Tdp2) from Mus musculus (Mouse).